The chain runs to 192 residues: Peptidyl-tRNA hydrolase (192 aa).

Tyr17 provides a ligand contact to tRNA. His22 (proton acceptor) is an active-site residue. Phe68, Asn70, and Asn116 together coordinate tRNA.

This sequence belongs to the PTH family. Monomer.

Its subcellular location is the cytoplasm. The enzyme catalyses an N-acyl-L-alpha-aminoacyl-tRNA + H2O = an N-acyl-L-amino acid + a tRNA + H(+). Functionally, hydrolyzes ribosome-free peptidyl-tRNAs (with 1 or more amino acids incorporated), which drop off the ribosome during protein synthesis, or as a result of ribosome stalling. In terms of biological role, catalyzes the release of premature peptidyl moieties from peptidyl-tRNA molecules trapped in stalled 50S ribosomal subunits, and thus maintains levels of free tRNAs and 50S ribosomes. This Buchnera aphidicola subsp. Cinara cedri (strain Cc) protein is Peptidyl-tRNA hydrolase.